The primary structure comprises 510 residues: Probable inositol 3-phosphate synthase isozyme 3 (510 aa).

Belongs to the myo-inositol 1-phosphate synthase family. It depends on NAD(+) as a cofactor. As to expression, expressed in siliques, leaves, roots, seed endosperm, but not in embryos. Highest expression in roots. Confined to vascular tissue and hydathodes of leaves.

Its subcellular location is the cytoplasm. It carries out the reaction D-glucose 6-phosphate = 1D-myo-inositol 3-phosphate. It functions in the pathway polyol metabolism; myo-inositol biosynthesis; myo-inositol from D-glucose 6-phosphate: step 1/2. Key enzyme in myo-inositol biosynthesis pathway that catalyzes the conversion of glucose 6-phosphate to 1-myo-inositol 1-phosphate in a NAD-dependent manner. This is Probable inositol 3-phosphate synthase isozyme 3 (IPS3) from Arabidopsis thaliana (Mouse-ear cress).